A 392-amino-acid polypeptide reads, in one-letter code: uncharacterized protein (392 aa).

An N-terminal signal peptide occupies residues 1–23 (MWTALVLVWISSVLLPRSHMMSA). Topologically, residues 24-342 (EPRNIVTNKW…DALTPSLVNK (319 aa)) are extracellular. Residue asparagine 77 is glycosylated (N-linked (GlcNAc...) asparagine). 2 disordered regions span residues 83-154 (AEVT…PRTA) and 167-320 (AAGT…TDSC). Residues 86–97 (TTHGTNTSTPTT) are compositionally biased toward low complexity. Composition is skewed to polar residues over residues 107–127 (SRTLAVPTSSGPSSAEQTRPT) and 170–249 (TVNT…SAST). Asparagine 172 carries N-linked (GlcNAc...) asparagine glycosylation. Low complexity-rich tracts occupy residues 265–277 (SPTTQPSPTLPTQ) and 284–309 (TLLTTEQVGTKTTSGTASAGPTSRSS). The helical transmembrane segment at 343–363 (MLLLVVLLVGVTLFIAVLVMF) threads the bilayer. Residues 364 to 392 (ALQAYESYKKKDYTQVDYLINGMYADSEM) are Cytoplasmic-facing.

The protein localises to the cell membrane. It is found in the golgi apparatus. The protein resides in the trans-Golgi network membrane. This is an uncharacterized protein from Mus musculus (Mouse).